The following is a 328-amino-acid chain: Beta-agarase C (328 aa).

The N-terminal stretch at 1-17 is a signal peptide; sequence MNLTKMAVFAASLFCLA. Positions 18 to 67 are excised as a propeptide; sequence CKNDIDTELEKKSIPESEIQKSEEKLPNEEELTPTDPDEETNKEETVTAN. Over residues 26–45 the composition is skewed to basic and acidic residues; sequence LEKKSIPESEIQKSEEKLPN. A disordered region spans residues 26–61; the sequence is LEKKSIPESEIQKSEEKLPNEEELTPTDPDEETNKE. Residues 46–59 are compositionally biased toward acidic residues; that stretch reads EEELTPTDPDEETN. In terms of domain architecture, GH16 spans 70 to 328; sequence YDFTGNTPPP…WIHTYQLVEE (259 aa). Residues tryptophan 110, 119 to 129, 133 to 135, glutamate 188, glutamate 193, and arginine 224 each bind substrate; these read KAENSGVSDGK and KAT. Catalysis depends on glutamate 188, which acts as the Nucleophile. Glutamate 193 (proton donor) is an active-site residue.

It belongs to the glycosyl hydrolase 16 family.

The protein localises to the secreted. The catalysed reaction is Hydrolysis of (1-&gt;4)-beta-D-galactosidic linkages in agarose, giving the tetramer as the predominant product.. Its function is as follows. Cleaves the beta-1,4-linkages between beta-D-galactose and alpha-L-3,6-anhydro-galactose residues in agarose. Cleaves agarose in a random manner with retention of the anomeric-bond configuration, producing beta-anomers that give rise progressively to alpha-anomers when mutarotation takes place. This Zobellia galactanivorans (strain DSM 12802 / CCUG 47099 / CIP 106680 / NCIMB 13871 / Dsij) protein is Beta-agarase C (agaC).